The chain runs to 317 residues: Coproporphyrinogen-III oxidase, aerobic 1 (317 aa).

The tract at residues 38-47 is important for dimerization; sequence VLRDGAIFEQ. Ser-82 provides a ligand contact to substrate. His-96 (proton donor) is an active-site residue. Substrate is bound by residues 98 to 100 and 269 to 274; these read NYR and NGRTES. The tract at residues 251–286 is important for dimerization; that stretch reads YVEFNLVYDRGTIFGLQTNGRTESILMSLPPLVRWE.

Belongs to the aerobic coproporphyrinogen-III oxidase family. In terms of assembly, homodimer.

The protein resides in the cytoplasm. It carries out the reaction coproporphyrinogen III + O2 + 2 H(+) = protoporphyrinogen IX + 2 CO2 + 2 H2O. Its pathway is porphyrin-containing compound metabolism; protoporphyrin-IX biosynthesis; protoporphyrinogen-IX from coproporphyrinogen-III (O2 route): step 1/1. Key enzyme in heme biosynthesis. Catalyzes the oxidative decarboxylation of propionic acid side chains of rings A and B of coproporphyrinogen III. The protein is Coproporphyrinogen-III oxidase, aerobic 1 of Nostoc sp. (strain PCC 7120 / SAG 25.82 / UTEX 2576).